The primary structure comprises 336 residues: Urokinase plasminogen activator surface receptor (336 aa).

An N-terminal signal peptide occupies residues 1–23 (MGHPLLLPLLLLLLHTGVPASWG). 3 consecutive UPAR/Ly6 domains span residues 24–111 (LRCM…VTFP), 116–208 (LECI…LSLA), and 215–302 (HRCY…EDIQ). 3 disulfide bridges follow: C26-C47, C29-C35, and C40-C68. A glycan (N-linked (GlcNAc...) asparagine) is linked at N75. Cystine bridges form between C94–C99, C118–C145, C121–C128, C138–C170, C176–C193, C194–C199, C217–C245, C220–C228, C238–C264, C270–C288, and C289–C294. N-linked (GlcNAc...) asparagine glycosylation is found at N195 and N223.

Monomer. Interacts (via the UPAR/Ly6 domains) with SRPX2. Interacts with MRC2. Interacts with FAP (seprase); the interaction occurs at the cell surface of invadopodia membrane. Interacts with SORL1 (via N-terminal ectodomain); this interaction decreases PLAUR internalization. The ternary complex composed of PLAUR-PLAU-SERPINE1 also interacts with SORL1.

Its subcellular location is the cell membrane. The protein resides in the cell projection. It is found in the invadopodium membrane. Functionally, acts as a receptor for urokinase plasminogen activator. Plays a role in localizing and promoting plasmin formation. Mediates the proteolysis-independent signal transduction activation effects of U-PA. It is subject to negative-feedback regulation by U-PA which cleaves it into an inactive form. In Aotus trivirgatus (Three-striped night monkey), this protein is Urokinase plasminogen activator surface receptor (PLAUR).